The chain runs to 319 residues: 4-hydroxy-3-methylbut-2-enyl diphosphate reductase (319 aa).

A [4Fe-4S] cluster-binding site is contributed by cysteine 12. Histidine 41 and histidine 74 together coordinate (2E)-4-hydroxy-3-methylbut-2-enyl diphosphate. 2 residues coordinate dimethylallyl diphosphate: histidine 41 and histidine 74. 2 residues coordinate isopentenyl diphosphate: histidine 41 and histidine 74. Cysteine 96 is a binding site for [4Fe-4S] cluster. Histidine 124 is a (2E)-4-hydroxy-3-methylbut-2-enyl diphosphate binding site. Histidine 124 serves as a coordination point for dimethylallyl diphosphate. Histidine 124 contacts isopentenyl diphosphate. Residue glutamate 126 is the Proton donor of the active site. Threonine 167 provides a ligand contact to (2E)-4-hydroxy-3-methylbut-2-enyl diphosphate. Residue cysteine 197 coordinates [4Fe-4S] cluster. (2E)-4-hydroxy-3-methylbut-2-enyl diphosphate is bound by residues serine 225, serine 226, asparagine 227, and serine 269. The dimethylallyl diphosphate site is built by serine 225, serine 226, asparagine 227, and serine 269. The isopentenyl diphosphate site is built by serine 225, serine 226, asparagine 227, and serine 269.

The protein belongs to the IspH family. In terms of assembly, homodimer. Requires [4Fe-4S] cluster as cofactor.

The enzyme catalyses isopentenyl diphosphate + 2 oxidized [2Fe-2S]-[ferredoxin] + H2O = (2E)-4-hydroxy-3-methylbut-2-enyl diphosphate + 2 reduced [2Fe-2S]-[ferredoxin] + 2 H(+). The catalysed reaction is dimethylallyl diphosphate + 2 oxidized [2Fe-2S]-[ferredoxin] + H2O = (2E)-4-hydroxy-3-methylbut-2-enyl diphosphate + 2 reduced [2Fe-2S]-[ferredoxin] + 2 H(+). Its pathway is isoprenoid biosynthesis; dimethylallyl diphosphate biosynthesis; dimethylallyl diphosphate from (2E)-4-hydroxy-3-methylbutenyl diphosphate: step 1/1. The protein operates within isoprenoid biosynthesis; isopentenyl diphosphate biosynthesis via DXP pathway; isopentenyl diphosphate from 1-deoxy-D-xylulose 5-phosphate: step 6/6. Functionally, catalyzes the conversion of 1-hydroxy-2-methyl-2-(E)-butenyl 4-diphosphate (HMBPP) into a mixture of isopentenyl diphosphate (IPP) and dimethylallyl diphosphate (DMAPP). Acts in the terminal step of the DOXP/MEP pathway for isoprenoid precursor biosynthesis. The sequence is that of 4-hydroxy-3-methylbut-2-enyl diphosphate reductase from Buchnera aphidicola subsp. Acyrthosiphon pisum (strain Tuc7).